The chain runs to 87 residues: MARVTVEDCLEHVDNRFELVMLSTKRARQLATGGKEPRVAWENDKPTVVALREIAEGIVTPEFIAAEEIVTEDPVFAAFEDENNEAV.

It belongs to the RNA polymerase subunit omega family. The RNAP catalytic core consists of 2 alpha, 1 beta, 1 beta' and 1 omega subunit. When a sigma factor is associated with the core the holoenzyme is formed, which can initiate transcription.

The catalysed reaction is RNA(n) + a ribonucleoside 5'-triphosphate = RNA(n+1) + diphosphate. In terms of biological role, promotes RNA polymerase assembly. Latches the N- and C-terminal regions of the beta' subunit thereby facilitating its interaction with the beta and alpha subunits. The chain is DNA-directed RNA polymerase subunit omega from Pseudomonas entomophila (strain L48).